A 146-amino-acid chain; its full sequence is UPF0178 protein BCE33L2782 (146 aa).

It belongs to the UPF0178 family.

The polypeptide is UPF0178 protein BCE33L2782 (Bacillus cereus (strain ZK / E33L)).